The primary structure comprises 512 residues: 2-isopropylmalate synthase (512 aa).

The Pyruvate carboxyltransferase domain maps to 4–266 (IQFFDTTLRD…ETNIVLNQFK (263 aa)). Residues Asp-13, His-201, His-203, and Asn-237 each contribute to the Mn(2+) site. The interval 390 to 512 (ELKHLQVQYV…SKQADFEEVK (123 aa)) is regulatory domain.

Belongs to the alpha-IPM synthase/homocitrate synthase family. LeuA type 1 subfamily. Homodimer. It depends on Mn(2+) as a cofactor.

The protein localises to the cytoplasm. The catalysed reaction is 3-methyl-2-oxobutanoate + acetyl-CoA + H2O = (2S)-2-isopropylmalate + CoA + H(+). It participates in amino-acid biosynthesis; L-leucine biosynthesis; L-leucine from 3-methyl-2-oxobutanoate: step 1/4. Functionally, catalyzes the condensation of the acetyl group of acetyl-CoA with 3-methyl-2-oxobutanoate (2-ketoisovalerate) to form 3-carboxy-3-hydroxy-4-methylpentanoate (2-isopropylmalate). The protein is 2-isopropylmalate synthase of Listeria monocytogenes serotype 4a (strain HCC23).